Reading from the N-terminus, the 264-residue chain is Phosphate import ATP-binding protein PstB (264 aa).

In terms of domain architecture, ABC transporter spans 11–250 (LKAEALSVYY…DTTEKIFDSP (240 aa)). ATP is bound at residue 43 to 50 (GPSGCGKS).

It belongs to the ABC transporter superfamily. Phosphate importer (TC 3.A.1.7) family. The complex is composed of two ATP-binding proteins (PstB), two transmembrane proteins (PstC and PstA) and a solute-binding protein (PstS).

It localises to the cell inner membrane. The enzyme catalyses phosphate(out) + ATP + H2O = ADP + 2 phosphate(in) + H(+). Part of the ABC transporter complex PstSACB involved in phosphate import. Responsible for energy coupling to the transport system. This is Phosphate import ATP-binding protein PstB from Synechococcus elongatus (strain ATCC 33912 / PCC 7942 / FACHB-805) (Anacystis nidulans R2).